Here is a 124-residue protein sequence, read N- to C-terminus: Fluoride-specific ion channel FluC 1 (124 aa).

The next 4 helical transmembrane spans lie at 1–21 (MCAV…ALGA), 30–50 (LWPG…LLGY), 64–84 (FLGV…VDAV), and 93–113 (LYVV…MLAG). Na(+)-binding residues include G71 and T74.

Belongs to the fluoride channel Fluc/FEX (TC 1.A.43) family.

The protein localises to the cell membrane. It catalyses the reaction fluoride(in) = fluoride(out). Its activity is regulated as follows. Na(+) is not transported, but it plays an essential structural role and its presence is essential for fluoride channel function. Functionally, fluoride-specific ion channel. Important for reducing fluoride concentration in the cell, thus reducing its toxicity. This Rhodococcus jostii (strain RHA1) protein is Fluoride-specific ion channel FluC 1.